The sequence spans 210 residues: Protein GrpE (210 aa).

The disordered stretch occupies residues 191 to 210 (KGGPKPAEAETNSVFDEKDA).

It belongs to the GrpE family. As to quaternary structure, homodimer.

Its subcellular location is the cytoplasm. In terms of biological role, participates actively in the response to hyperosmotic and heat shock by preventing the aggregation of stress-denatured proteins, in association with DnaK and GrpE. It is the nucleotide exchange factor for DnaK and may function as a thermosensor. Unfolded proteins bind initially to DnaJ; upon interaction with the DnaJ-bound protein, DnaK hydrolyzes its bound ATP, resulting in the formation of a stable complex. GrpE releases ADP from DnaK; ATP binding to DnaK triggers the release of the substrate protein, thus completing the reaction cycle. Several rounds of ATP-dependent interactions between DnaJ, DnaK and GrpE are required for fully efficient folding. The protein is Protein GrpE of Rhizobium etli (strain CIAT 652).